A 780-amino-acid polypeptide reads, in one-letter code: Molybdenum cofactor sulfurase (780 aa).

Position 246 is an N6-(pyridoxal phosphate)lysine (K246). Residue C413 is part of the active site. Residues 635 to 780 (LRLLRQSGQR…MTCGDVVLVE (146 aa)) form the MOSC domain. Position 734 is a phosphoserine (S734).

This sequence belongs to the class-V pyridoxal-phosphate-dependent aminotransferase family. MOCOS subfamily. Pyridoxal 5'-phosphate is required as a cofactor.

The catalysed reaction is Mo-molybdopterin + L-cysteine + AH2 = thio-Mo-molybdopterin + L-alanine + A + H2O. In terms of biological role, sulfurates the molybdenum cofactor. Sulfation of molybdenum is essential for xanthine dehydrogenase (XDH) and aldehyde oxidase (ADO) enzymes in which molybdenum cofactor is liganded by 1 oxygen and 1 sulfur atom in active form. This chain is Molybdenum cofactor sulfurase, found in Drosophila yakuba (Fruit fly).